The chain runs to 3434 residues: Genome polyprotein (3434 aa).

Residues 1–106 (MSKKPGGPGR…NRGTKKKRGN (106 aa)) lie on the Cytoplasmic side of the membrane. Residues 2–15 (SKKPGGPGRNRAIN) are interaction with host EXOC1. Residues 37-72 (LLDGRGPVRFVLALMTFFKFTALAPTKALLGRWKRI) form a hydrophobic; homodimerization of capsid protein C region. The propeptide at 105-126 (GNNGPGLVMIITLMTVVSMVSS) is ER anchor for the capsid protein C, removed in mature form by serine protease NS3. The helical transmembrane segment at 107-126 (NGPGLVMIITLMTVVSMVSS) threads the bilayer. The Extracellular portion of the chain corresponds to 127-248 (LKLSNFQGKV…DSTKASRYLM (122 aa)). Asn141 carries an N-linked (GlcNAc...) asparagine; by host glycan. A helical membrane pass occupies residues 249–273 (KTENWIIRNPGYAFVAVLLGWMLGS). Residues 274–278 (NNGQR) lie on the Cytoplasmic side of the membrane. The helical transmembrane segment at 279–293 (VVFVVLLLLVAPAYS) threads the bilayer. Residues 294–745 (FNCLGMSNRD…QVFGGAFRTL (452 aa)) lie on the Extracellular side of the membrane. 8 disulfide bridges follow: Cys296–Cys323, Cys353–Cys409, Cys353–Cys414, Cys367–Cys398, Cys385–Cys409, Cys385–Cys414, Cys483–Cys580, and Cys597–Cys628. Residues 391–404 (DRGWGNGCGLFGKG) form a fusion peptide region. A helical transmembrane segment spans residues 746–766 (FGGMSWITQGLMGALLLWMGV). The Cytoplasmic segment spans residues 767–772 (NARDRS). A helical transmembrane segment spans residues 773-793 (IALVMLATGGVLLFLATNVHA). At 794–1218 (DSGCAIDVGR…AFAEANSGGD (425 aa)) the chain is on the extracellular side. Disulfide bonds link Cys797/Cys808 and Cys848/Cys936. 3 N-linked (GlcNAc...) asparagine; by host glycosylation sites follow: Asn923, Asn968, and Asn1000. Cystine bridges form between Cys972–Cys1016, Cys1073–Cys1122, Cys1084–Cys1105, Cys1084–Cys1106, Cys1105–Cys1109, and Cys1106–Cys1109. Residues 1219–1239 (VVHLALIAAFKIQPGFLAMTF) form a helical membrane-spanning segment. The Cytoplasmic segment spans residues 1240–1249 (LRGKWTNQEN). A helical membrane pass occupies residues 1250 to 1270 (ILLALGAAFFQMAATDLNFSL). The Lumenal segment spans residues 1271–1286 (PGILNATATAWMLLRA). A helical membrane pass occupies residues 1287–1307 (ATQPSTSAIVMPLLCLLAPGM). Position 1308 (Arg1308) is a topological domain, cytoplasmic. Residues 1309–1329 (LLYLDTYRITLIIIGICSLIG) traverse the membrane as a helical segment. Residues 1330-1340 (ERRRAAAKKKG) are Lumenal-facing. The helical transmembrane segment at 1341–1361 (AVLLGLALTSTGQFSASVMAA) threads the bilayer. Residues 1362–1373 (GLMACNPNKKRG) are Cytoplasmic-facing. A helical transmembrane segment spans residues 1374–1394 (WPATEVLTAVGLMFAIVGGLA). Topologically, residues 1395 to 1397 (ELD) are lumenal. Residues 1398-1418 (VDSMSIPFVLAGLMAVSYTIS) form a helical membrane-spanning segment. Residues 1419 to 1475 (GKSTDLWLERAADITWETDAAITGTSQRLDVKLDDDGDFHLINDPGVPWKIWVIRMT) are Cytoplasmic-facing. The interval 1426–1465 (LERAADITWETDAAITGTSQRLDVKLDDDGDFHLINDPGV) is interacts with and activates NS3 protease. The helical intramembrane region spans 1476 to 1496 (ALGFAAWTPWAIIPAGIGYWL). At 1497 to 2173 (TVKYAKRGGV…MALEELPDAL (677 aa)) the chain is on the cytoplasmic side. One can recognise a Peptidase S7 domain in the interval 1504-1681 (GGVFWDTPAP…EREEEPVPEA (178 aa)). Catalysis depends on charge relay system; for serine protease NS3 activity residues His1554, Asp1578, and Ser1638. One can recognise a Helicase ATP-binding domain in the interval 1684 to 1840 (ADMLRKKQLT…DTNAPVTDIQ (157 aa)). Residues 1688 to 1691 (RKKQ) are important for RNA-binding. 1697-1704 (LHPGAGKT) is a binding site for ATP. The DEAH box signature appears at 1788–1791 (DEAH). In terms of domain architecture, Helicase C-terminal spans 1851–2016 (GFEWITEYTG…GLVAQMYGPE (166 aa)). Lys1892 carries the post-translational modification N6-acetyllysine; by host. The segment at 1956–1980 (ASAAQRRGRVGRNPSQIGDEYHYGG) is disordered. Positions 2167–2171 (EELPD) are regulates the ATPase activity of NS3 helicase. The chain crosses the membrane as a helical span at residues 2174 to 2194 (ETITLIVALAVMTAGVFLLLV). At 2195-2198 (QRRG) the chain is on the lumenal side. The segment at residues 2199–2219 (IGKLGLGGMVLGLATFFLWMA) is an intramembrane region (helical). Residue Asp2220 is a topological domain, lumenal. Residues 2221 to 2241 (VSGTKIAGTLLLALLMMIVLI) form a helical membrane-spanning segment. Residues 2242-2256 (PEPEKQRSQTDNQLA) are Cytoplasmic-facing. The chain crosses the membrane as a helical span at residues 2257–2277 (VFLICVLLVVGVVAANEYGML). Residues 2278-2313 (ERTKSDLGKIFSSTRQPQSALPLPSMNALALDLRPA) are Lumenal-facing. Positions 2314–2334 (TAWALYGGSTVVLTPLIKHLV) form an intramembrane region, helical. The Lumenal segment spans residues 2335–2368 (TSEYITTSLASISAQAGSLFNLPRGLPFTELDFT). Residues 2369-2389 (VVLVFLGCWGQVSLTTLITAA) traverse the membrane as a helical segment. Over 2390 to 2446 (ALATLHYGYMLPGWQAEALRAAQRRTAAGIMKNAVVDGLVATDVPELERTTPLMQKK) the chain is Cytoplasmic. The helical transmembrane segment at 2447 to 2467 (VGQILLIGVSAAALLVNPCVT) threads the bilayer. Residues 2468–2471 (TVRE) lie on the Lumenal side of the membrane. Residues 2472 to 2492 (AGILISAALLTLWDNGAIAVW) traverse the membrane as a helical segment. Topologically, residues 2493-3434 (NSTTATGLCH…EVNVQEDRVL (942 aa)) are cytoplasmic. The mRNA cap 0-1 NS5-type MT domain maps to 2530-2795 (GRPGGRTLGE…DVNLGSGTRA (266 aa)). A disordered region spans residues 2567–2587 (SAARKARRDGNKTGGHPVSRG). Residue Ser2585 coordinates S-adenosyl-L-methionine. A Phosphoserine modification is found at Ser2585. Lys2590 (for 2'-O-MTase activity) is an active-site residue. S-adenosyl-L-methionine-binding residues include Gly2615, Trp2616, Thr2633, Lys2634, Asp2660, and Val2661. The active-site For 2'-O-MTase activity is the Asp2675. Ile2676 is an S-adenosyl-L-methionine binding site. Active-site for 2'-O-MTase activity residues include Lys2711 and Glu2747. Tyr2749 contributes to the S-adenosyl-L-methionine binding site. Zn(2+) is bound by residues Glu2969, His2973, Cys2978, and Cys2981. Residues 3059-3211 (GKMYADDTAG…KPLDDRFANA (153 aa)) form the RdRp catalytic domain. His3246, Cys3262, and Cys3381 together coordinate Zn(2+).

The protein in the N-terminal section; belongs to the class I-like SAM-binding methyltransferase superfamily. mRNA cap 0-1 NS5-type methyltransferase family. In terms of assembly, homodimer. Interacts (via N-terminus) with host EXOC1 (via C-terminus); this interaction results in EXOC1 degradation through the proteasome degradation pathway. As to quaternary structure, forms heterodimers with envelope protein E in the endoplasmic reticulum and Golgi. Homodimer; in the endoplasmic reticulum and Golgi. Interacts with protein prM. Interacts with non-structural protein 1. In terms of assembly, homodimer; Homohexamer when secreted. Interacts with envelope protein E. NS1 interacts with NS4B. Interacts with host complement protein CFH; this interaction leads to the degradation of C3. As to quaternary structure, interacts (via N-terminus) with serine protease NS3. Forms a heterodimer with serine protease NS3. May form homooligomers. In terms of assembly, forms a heterodimer with NS2B. Interacts with non-structural protein 2A (via N-terminus). Interacts with NS4B. Interacts with unphosphorylated RNA-directed RNA polymerase NS5; this interaction stimulates RNA-directed RNA polymerase NS5 guanylyltransferase activity. As to quaternary structure, interacts with serine protease NS3. Homodimer. Interacts with host STAT2; this interaction inhibits the phosphorylation of the latter, and, when all viral proteins are present (polyprotein), targets STAT2 for degradation. Interacts with serine protease NS3. Specific enzymatic cleavages in vivo yield mature proteins. Cleavages in the lumen of endoplasmic reticulum are performed by host signal peptidase, whereas cleavages in the cytoplasmic side are performed by serine protease NS3. Signal cleavage at the 2K-4B site requires a prior NS3 protease-mediated cleavage at the 4A-2K site. In terms of processing, cleaved in post-Golgi vesicles by a host furin, releasing the mature small envelope protein M, and peptide pr. This cleavage is incomplete as up to 30% of viral particles still carry uncleaved prM. Post-translationally, N-glycosylated. N-glycosylated. The excreted form is glycosylated and this is required for efficient secretion of the protein from infected cells. In terms of processing, acetylated by host KAT5. Acetylation modulates NS3 RNA-binding and unwinding activities and plays an important positive role for viral replication. Post-translationally, phosphorylated on serines residues. This phosphorylation may trigger NS5 nuclear localization.

It localises to the virion. It is found in the host nucleus. The protein resides in the host cytoplasm. Its subcellular location is the host perinuclear region. The protein localises to the secreted. It localises to the virion membrane. It is found in the host endoplasmic reticulum membrane. It catalyses the reaction Selective hydrolysis of -Xaa-Xaa-|-Yaa- bonds in which each of the Xaa can be either Arg or Lys and Yaa can be either Ser or Ala.. It carries out the reaction RNA(n) + a ribonucleoside 5'-triphosphate = RNA(n+1) + diphosphate. The catalysed reaction is a ribonucleoside 5'-triphosphate + H2O = a ribonucleoside 5'-diphosphate + phosphate + H(+). The enzyme catalyses ATP + H2O = ADP + phosphate + H(+). It catalyses the reaction a 5'-end (5'-triphosphoguanosine)-ribonucleoside in mRNA + S-adenosyl-L-methionine = a 5'-end (N(7)-methyl 5'-triphosphoguanosine)-ribonucleoside in mRNA + S-adenosyl-L-homocysteine. It carries out the reaction a 5'-end (N(7)-methyl 5'-triphosphoguanosine)-ribonucleoside in mRNA + S-adenosyl-L-methionine = a 5'-end (N(7)-methyl 5'-triphosphoguanosine)-(2'-O-methyl-ribonucleoside) in mRNA + S-adenosyl-L-homocysteine + H(+). Plays a role in virus budding by binding to the cell membrane and gathering the viral RNA into a nucleocapsid that forms the core of a mature virus particle. During virus entry, may induce genome penetration into the host cytoplasm after hemifusion induced by the surface proteins. Can migrate to the cell nucleus where it modulates host functions. Overcomes the anti-viral effects of host EXOC1 by sequestering and degrading the latter through the proteasome degradation pathway. In terms of biological role, inhibits RNA silencing by interfering with host Dicer. Functionally, prevents premature fusion activity of envelope proteins in trans-Golgi by binding to envelope protein E at pH6.0. After virion release in extracellular space, gets dissociated from E dimers. Its function is as follows. Acts as a chaperone for envelope protein E during intracellular virion assembly by masking and inactivating envelope protein E fusion peptide. prM is the only viral peptide matured by host furin in the trans-Golgi network probably to avoid catastrophic activation of the viral fusion activity in acidic Golgi compartment prior to virion release. prM-E cleavage is inefficient, and many virions are only partially matured. These uncleaved prM would play a role in immune evasion. May play a role in virus budding. Exerts cytotoxic effects by activating a mitochondrial apoptotic pathway through M ectodomain. May display a viroporin activity. In terms of biological role, binds to host cell surface receptor and mediates fusion between viral and cellular membranes. Envelope protein is synthesized in the endoplasmic reticulum in the form of heterodimer with protein prM. They play a role in virion budding in the ER, and the newly formed immature particle is covered with 60 spikes composed of heterodimer between precursor prM and envelope protein E. The virion is transported to the Golgi apparatus where the low pH causes dissociation of PrM-E heterodimers and formation of E homodimers. prM-E cleavage is inefficient, and many virions are only partially matured. These uncleaved prM would play a role in immune evasion. Functionally, involved in immune evasion, pathogenesis and viral replication. Once cleaved off the polyprotein, is targeted to three destinations: the viral replication cycle, the plasma membrane and the extracellular compartment. Essential for viral replication. Required for formation of the replication complex and recruitment of other non-structural proteins to the ER-derived membrane structures. Excreted as a hexameric lipoparticle that plays a role against host immune response. Antagonizing the complement function. Binds to the host macrophages and dendritic cells. Inhibits signal transduction originating from Toll-like receptor 3 (TLR3). Its function is as follows. Component of the viral RNA replication complex that functions in virion assembly and antagonizes the host alpha/beta interferon antiviral response. Required cofactor for the serine protease function of NS3. May have membrane-destabilizing activity and form viroporins. In terms of biological role, displays three enzymatic activities: serine protease, NTPase and RNA helicase. NS3 serine protease, in association with NS2B, performs its autocleavage and cleaves the polyprotein at dibasic sites in the cytoplasm: C-prM, NS2A-NS2B, NS2B-NS3, NS3-NS4A, NS4A-2K and NS4B-NS5. NS3 RNA helicase binds RNA and unwinds dsRNA in the 3' to 5' direction. Functionally, regulates the ATPase activity of the NS3 helicase activity. NS4A allows NS3 helicase to conserve energy during unwinding. Its function is as follows. Functions as a signal peptide for NS4B and is required for the interferon antagonism activity of the latter. Induces the formation of ER-derived membrane vesicles where the viral replication takes place. Inhibits interferon (IFN)-induced host STAT1 phosphorylation and nuclear translocation, thereby preventing the establishment of cellular antiviral state by blocking the IFN-alpha/beta pathway. Inhibits STAT2 translocation in the nucleus after IFN-alpha treatment. In terms of biological role, replicates the viral (+) and (-) RNA genome, and performs the capping of genomes in the cytoplasm. NS5 methylates viral RNA cap at guanine N-7 and ribose 2'-O positions. Besides its role in RNA genome replication, also prevents the establishment of cellular antiviral state by blocking the interferon-alpha/beta (IFN-alpha/beta) signaling pathway. Inhibits host TYK2 and STAT2 phosphorylation, thereby preventing activation of JAK-STAT signaling pathway. This is Genome polyprotein from Usutu virus (USUV).